The chain runs to 159 residues: Sulfur carrier protein DsrE2 (159 aa).

2 consecutive transmembrane segments (helical) span residues 21 to 43 (PFIL…TFYG) and 72 to 91 (WFPV…TAMM).

The protein localises to the cell membrane. It functions in the pathway energy metabolism; sulfur metabolism. Functionally, sulfur carrier protein probably involved in sulfur trafficking for oxidative dissimilatory sulfur metabolism. May be a component of a cytoplasmic sulfur relay system delivering sulfur to DsrC. Binds sulfur in the presence of sulfide in vitro. In Allochromatium vinosum (strain ATCC 17899 / DSM 180 / NBRC 103801 / NCIMB 10441 / D) (Chromatium vinosum), this protein is Sulfur carrier protein DsrE2.